The following is a 260-amino-acid chain: MNNPVLKPLVIKIGGAILEKESALNALLNVISQLKNKQVVLVHGGGCVVDEMLAQAGFTTEKKHGLRVTPKEQVGLISGALAGTVNKAIVGTANSMDLAAVGLSLNDGDMISCTLSTQDLGQVGVPQTNNSKLLDCLLKAKFLPVISSIGALDNGDLVNVNADDAAVAICQLLNAELLLLTDVNGVKDADGEYLSSLNAEQAQKLIEQGVIAGGMTAKVNAALHAAQQLRRSIAVASWQSPEQITQLLDGHGVGTQIQPN.

Substrate contacts are provided by residues 45 to 46, Arg67, and Asn159; that span reads GG.

It belongs to the acetylglutamate kinase family. ArgB subfamily.

It is found in the cytoplasm. The enzyme catalyses N-acetyl-L-glutamate + ATP = N-acetyl-L-glutamyl 5-phosphate + ADP. The protein operates within amino-acid biosynthesis; L-arginine biosynthesis; N(2)-acetyl-L-ornithine from L-glutamate: step 2/4. Functionally, catalyzes the ATP-dependent phosphorylation of N-acetyl-L-glutamate. This is Acetylglutamate kinase from Colwellia psychrerythraea (strain 34H / ATCC BAA-681) (Vibrio psychroerythus).